Reading from the N-terminus, the 189-residue chain is Peptidyl-tRNA hydrolase (189 aa).

Residue Y15 participates in tRNA binding. Catalysis depends on H20, which acts as the Proton acceptor. The tRNA site is built by Y65, N67, and N113.

Belongs to the PTH family. As to quaternary structure, monomer.

The protein resides in the cytoplasm. It catalyses the reaction an N-acyl-L-alpha-aminoacyl-tRNA + H2O = an N-acyl-L-amino acid + a tRNA + H(+). Functionally, hydrolyzes ribosome-free peptidyl-tRNAs (with 1 or more amino acids incorporated), which drop off the ribosome during protein synthesis, or as a result of ribosome stalling. Catalyzes the release of premature peptidyl moieties from peptidyl-tRNA molecules trapped in stalled 50S ribosomal subunits, and thus maintains levels of free tRNAs and 50S ribosomes. This Caldicellulosiruptor bescii (strain ATCC BAA-1888 / DSM 6725 / KCTC 15123 / Z-1320) (Anaerocellum thermophilum) protein is Peptidyl-tRNA hydrolase.